The sequence spans 186 residues: Protein GrpE (186 aa).

The segment covering 1–15 (MADEQQTLDQQTPEQ) has biased composition (polar residues). The interval 1–20 (MADEQQTLDQQTPEQPTGAA) is disordered.

The protein belongs to the GrpE family. In terms of assembly, homodimer.

It is found in the cytoplasm. Its function is as follows. Participates actively in the response to hyperosmotic and heat shock by preventing the aggregation of stress-denatured proteins, in association with DnaK and GrpE. It is the nucleotide exchange factor for DnaK and may function as a thermosensor. Unfolded proteins bind initially to DnaJ; upon interaction with the DnaJ-bound protein, DnaK hydrolyzes its bound ATP, resulting in the formation of a stable complex. GrpE releases ADP from DnaK; ATP binding to DnaK triggers the release of the substrate protein, thus completing the reaction cycle. Several rounds of ATP-dependent interactions between DnaJ, DnaK and GrpE are required for fully efficient folding. This is Protein GrpE from Pseudomonas aeruginosa (strain UCBPP-PA14).